The primary structure comprises 91 residues: uncharacterized protein (91 aa).

Positions M1 to A20 are cleaved as a signal peptide.

This sequence belongs to the BhsA/McbA family.

The protein resides in the periplasm. This is an uncharacterized protein from Escherichia coli O157:H7.